Consider the following 437-residue polypeptide: Glutamate-1-semialdehyde 2,1-aminomutase (437 aa).

The residue at position 277 (K277) is an N6-(pyridoxal phosphate)lysine.

It belongs to the class-III pyridoxal-phosphate-dependent aminotransferase family. HemL subfamily. In terms of assembly, homodimer. The cofactor is pyridoxal 5'-phosphate.

It is found in the cytoplasm. It carries out the reaction (S)-4-amino-5-oxopentanoate = 5-aminolevulinate. It functions in the pathway porphyrin-containing compound metabolism; protoporphyrin-IX biosynthesis; 5-aminolevulinate from L-glutamyl-tRNA(Glu): step 2/2. The protein operates within porphyrin-containing compound metabolism; chlorophyll biosynthesis. The sequence is that of Glutamate-1-semialdehyde 2,1-aminomutase from Thermosynechococcus vestitus (strain NIES-2133 / IAM M-273 / BP-1).